The sequence spans 266 residues: Undecaprenyl-diphosphatase (266 aa).

Helical transmembrane passes span 1-21 (MTWL…FLPI), 39-59 (QGLA…MVYF), 87-107 (WAVI…DSWI), 111-131 (LRSA…LGMA), 143-163 (FTLK…IPGT), 186-206 (FSFL…GLEL), 217-237 (EIAG…HLFL), and 243-263 (IGFM…LVWL).

The protein belongs to the UppP family.

Its subcellular location is the cell inner membrane. It carries out the reaction di-trans,octa-cis-undecaprenyl diphosphate + H2O = di-trans,octa-cis-undecaprenyl phosphate + phosphate + H(+). Functionally, catalyzes the dephosphorylation of undecaprenyl diphosphate (UPP). Confers resistance to bacitracin. The chain is Undecaprenyl-diphosphatase from Hahella chejuensis (strain KCTC 2396).